A 1018-amino-acid polypeptide reads, in one-letter code: Thrombospondin type-1 domain-containing protein 4 (1018 aa).

An N-terminal signal peptide occupies residues 1-25 (MVSHFMGSLSVLCFLLLLGFQFVCP). Residues 53–307 (PGVWGAWGPW…YKLCNTNVCP (255 aa)) form the TSP type-1 1 domain. Disordered stretches follow at residues 111–235 (SVPL…RSGL), 254–279 (PAAS…ATQS), and 534–623 (SPQV…NWKQ). Residues 187–200 (QRLRRQKLSSRHSR) show a composition bias toward basic residues. A compositionally biased stretch (low complexity) spans 201–210 (SQGASSARHG). Residues 259-279 (LFHSPETSNNHGVGTHGATQS) are compositionally biased toward polar residues. Composition is skewed to basic and acidic residues over residues 556–577 (RSQE…RGEA) and 592–603 (RHPDRFSPHRPD). TSP type-1 domains follow at residues 676–737 (CPAF…KICS), 739–792 (WQIR…DMGP), 793–851 (CAKS…GPCT), 852–911 (GKVE…HLKP), and 912–968 (CGAK…QDCV). The region spanning 971–1008 (VDENCKDKYYNCNVVVQARLCVYNYYKTACCASCTRVA) is the PLAC domain.

As to quaternary structure, interacts with FBN1. May interact with TGFB1.

The protein localises to the secreted. Its subcellular location is the extracellular space. It is found in the extracellular matrix. Functionally, promotes FBN1 matrix assembly. Attenuates TGFB signaling, possibly by accelerating the sequestration of large latent complexes of TGFB or active TGFB by FBN1 microfibril assembly, thereby negatively regulating the expression of TGFB regulatory targets, such as POSTN. The sequence is that of Thrombospondin type-1 domain-containing protein 4 (THSD4) from Homo sapiens (Human).